A 321-amino-acid chain; its full sequence is Coiled-coil domain-containing protein 42-like 1 (321 aa).

2 coiled-coil regions span residues 36–144 and 202–229; these read IRRL…EKCH and IVQF…WELR.

It belongs to the CFAP73 family.

The protein is Coiled-coil domain-containing protein 42-like 1 of Xenopus laevis (African clawed frog).